The primary structure comprises 321 residues: Aspartate carbamoyltransferase catalytic subunit (321 aa).

Carbamoyl phosphate is bound by residues Arg-64 and Thr-65. Lys-92 is an L-aspartate binding site. Residues Arg-114, His-142, and Gln-145 each coordinate carbamoyl phosphate. L-aspartate contacts are provided by Arg-175 and Arg-229. Positions 270 and 271 each coordinate carbamoyl phosphate.

The protein belongs to the aspartate/ornithine carbamoyltransferase superfamily. ATCase family. Heterododecamer (2C3:3R2) of six catalytic PyrB chains organized as two trimers (C3), and six regulatory PyrI chains organized as three dimers (R2).

It carries out the reaction carbamoyl phosphate + L-aspartate = N-carbamoyl-L-aspartate + phosphate + H(+). It participates in pyrimidine metabolism; UMP biosynthesis via de novo pathway; (S)-dihydroorotate from bicarbonate: step 2/3. In terms of biological role, catalyzes the condensation of carbamoyl phosphate and aspartate to form carbamoyl aspartate and inorganic phosphate, the committed step in the de novo pyrimidine nucleotide biosynthesis pathway. This is Aspartate carbamoyltransferase catalytic subunit from Azorhizobium caulinodans (strain ATCC 43989 / DSM 5975 / JCM 20966 / LMG 6465 / NBRC 14845 / NCIMB 13405 / ORS 571).